The chain runs to 98 residues: NADH-ubiquinone oxidoreductase chain 4L (98 aa).

3 consecutive transmembrane segments (helical) span residues 1–21, 29–49, and 61–81; these read MSLT…GLLM, SLLC…MAIL, and IILL…LVMV.

The protein belongs to the complex I subunit 4L family. In terms of assembly, core subunit of respiratory chain NADH dehydrogenase (Complex I) which is composed of 45 different subunits.

It localises to the mitochondrion inner membrane. The enzyme catalyses a ubiquinone + NADH + 5 H(+)(in) = a ubiquinol + NAD(+) + 4 H(+)(out). Its function is as follows. Core subunit of the mitochondrial membrane respiratory chain NADH dehydrogenase (Complex I) which catalyzes electron transfer from NADH through the respiratory chain, using ubiquinone as an electron acceptor. Part of the enzyme membrane arm which is embedded in the lipid bilayer and involved in proton translocation. This Vampyressa melissa (Melissa's yellow-eared bat) protein is NADH-ubiquinone oxidoreductase chain 4L (MT-ND4L).